A 227-amino-acid polypeptide reads, in one-letter code: Gamma-glutamyl-hercynylcysteine sulfoxide hydrolase (227 aa).

Cys-2 acts as the Nucleophile in catalysis. The 226-residue stretch at 2–227 folds into the Glutamine amidotransferase type-2 domain; sequence CRHVAWLGAP…RDAHVVVTPL (226 aa).

The enzyme catalyses gamma-L-glutamyl-hercynylcysteine S-oxide + H2O = S-(hercyn-2-yl)-L-cysteine S-oxide + L-glutamate. Its pathway is amino-acid biosynthesis; ergothioneine biosynthesis. Its function is as follows. Catalyzes the hydrolysis of the gamma-glutamyl amide bond of hercynyl-gamma-L-glutamyl-L-cysteine sulfoxide to produce hercynylcysteine sulfoxide, a step in the biosynthesis pathway of ergothioneine. This Mycolicibacterium smegmatis (strain ATCC 700084 / mc(2)155) (Mycobacterium smegmatis) protein is Gamma-glutamyl-hercynylcysteine sulfoxide hydrolase.